Here is a 91-residue protein sequence, read N- to C-terminus: Small ribosomal subunit protein bS16c (91 aa).

This sequence belongs to the bacterial ribosomal protein bS16 family.

The protein resides in the plastid. It localises to the chloroplast. This Vitis vinifera (Grape) protein is Small ribosomal subunit protein bS16c.